The sequence spans 147 residues: Large ribosomal subunit protein uL15 (147 aa).

The segment at 1-54 (MKLFELQPAPGSKKLPNRKGRGIGSGNGKTGGRGHKGQNARAGGGVRPGFEGGQ) is disordered. Gly residues-rich tracts occupy residues 22 to 31 (GIGSGNGKTG) and 42 to 52 (AGGGVRPGFEG).

Belongs to the universal ribosomal protein uL15 family. As to quaternary structure, part of the 50S ribosomal subunit.

Its function is as follows. Binds to the 23S rRNA. The chain is Large ribosomal subunit protein uL15 from Ruminiclostridium cellulolyticum (strain ATCC 35319 / DSM 5812 / JCM 6584 / H10) (Clostridium cellulolyticum).